The following is a 147-amino-acid chain: Transthyretin (147 aa).

The signal sequence occupies residues 1-20 (MASHRLLLLCLAGLVFVSEA). Sulfocysteine is present on Cys-30. Lys-35 contacts L-thyroxine. Residue Glu-62 is modified to 4-carboxyglutamate; in a patient with Moyamoya disease. Ser-72 bears the Phosphoserine mark. Position 74 (Glu-74) interacts with L-thyroxine. An N-linked (GlcNAc...) asparagine glycan is attached at Asn-118. Ser-137 serves as a coordination point for L-thyroxine.

Belongs to the transthyretin family. In terms of assembly, homotetramer. Dimer of dimers. In the homotetramer, subunits assemble around a central channel that can accommodate two ligand molecules. Interacts with RBP4. Post-translationally, not glycosylated under normal conditions. Following unfolding, caused for example by variant AMYLD1 'Gly-38', the cryptic Asn-118 site is exposed and glycosylated by STT3B-containing OST complex, leading to its degradation by the ER-associated degradation (ERAD) pathway. Sulfonation of the reactive cysteine Cys-30 enhances the stability of the native conformation of TTR, avoiding misassembly of the protein leading to amyloid formation. Detected in serum and cerebrospinal fluid (at protein level). Highly expressed in choroid plexus epithelial cells. Detected in retina pigment epithelium and liver.

Its subcellular location is the secreted. It localises to the cytoplasm. Functionally, thyroid hormone-binding protein. Probably transports thyroxine from the bloodstream to the brain. The sequence is that of Transthyretin (TTR) from Homo sapiens (Human).